The primary structure comprises 401 residues: L-methionine gamma-lyase (401 aa).

Pyridoxal 5'-phosphate is bound by residues 59-61 (YTR) and 89-90 (GI). Tyr114 lines the substrate pocket. 210–212 (SAT) provides a ligand contact to pyridoxal 5'-phosphate. The residue at position 213 (Lys213) is an N6-(pyridoxal phosphate)lysine. Substrate is bound at residue Arg377.

This sequence belongs to the trans-sulfuration enzymes family. L-methionine gamma-lyase subfamily. In terms of assembly, homotetramer; dimer of active dimers. Pyridoxal 5'-phosphate serves as cofactor.

The enzyme catalyses L-methionine + H2O = methanethiol + 2-oxobutanoate + NH4(+). The catalysed reaction is L-homocysteine + H2O = 2-oxobutanoate + hydrogen sulfide + NH4(+) + H(+). In terms of biological role, catalyzes the alpha,gamma-elimination of L-methionine to produce methanethiol, 2-oxobutanoate and ammonia; methanethiol (methyl mercaptan) is considered to be one of the main causes of the oral malodor associated with periodontitis and may also play a role in the pathogenicity of T.denticola. Also displays homocysteine desulfhydrase activity, degrading homocysteine to produce hydrogen sulfide, 2-oxobutanoate and ammonia. The protein is L-methionine gamma-lyase of Treponema denticola (strain ATCC 35405 / DSM 14222 / CIP 103919 / JCM 8153 / KCTC 15104).